We begin with the raw amino-acid sequence, 258 residues long: Imidazole glycerol phosphate synthase subunit HisF (258 aa).

Active-site residues include Asp-11 and Asp-130.

This sequence belongs to the HisA/HisF family. As to quaternary structure, heterodimer of HisH and HisF.

The protein resides in the cytoplasm. It catalyses the reaction 5-[(5-phospho-1-deoxy-D-ribulos-1-ylimino)methylamino]-1-(5-phospho-beta-D-ribosyl)imidazole-4-carboxamide + L-glutamine = D-erythro-1-(imidazol-4-yl)glycerol 3-phosphate + 5-amino-1-(5-phospho-beta-D-ribosyl)imidazole-4-carboxamide + L-glutamate + H(+). The protein operates within amino-acid biosynthesis; L-histidine biosynthesis; L-histidine from 5-phospho-alpha-D-ribose 1-diphosphate: step 5/9. Its function is as follows. IGPS catalyzes the conversion of PRFAR and glutamine to IGP, AICAR and glutamate. The HisF subunit catalyzes the cyclization activity that produces IGP and AICAR from PRFAR using the ammonia provided by the HisH subunit. This is Imidazole glycerol phosphate synthase subunit HisF from Escherichia fergusonii (strain ATCC 35469 / DSM 13698 / CCUG 18766 / IAM 14443 / JCM 21226 / LMG 7866 / NBRC 102419 / NCTC 12128 / CDC 0568-73).